We begin with the raw amino-acid sequence, 344 residues long: Dihydroorotase (344 aa).

Zn(2+)-binding residues include histidine 13 and histidine 15. Substrate contacts are provided by residues 15 to 17 and asparagine 41; that span reads HFR. Zn(2+)-binding residues include lysine 98, histidine 135, and histidine 173. At lysine 98 the chain carries N6-carboxylysine. Histidine 135 contributes to the substrate binding site. Leucine 218 contributes to the substrate binding site. Residue aspartate 246 coordinates Zn(2+). Aspartate 246 is an active-site residue. 2 residues coordinate substrate: histidine 250 and alanine 262.

The protein belongs to the metallo-dependent hydrolases superfamily. DHOase family. Class II DHOase subfamily. As to quaternary structure, homodimer. Zn(2+) is required as a cofactor.

The catalysed reaction is (S)-dihydroorotate + H2O = N-carbamoyl-L-aspartate + H(+). Its pathway is pyrimidine metabolism; UMP biosynthesis via de novo pathway; (S)-dihydroorotate from bicarbonate: step 3/3. Its function is as follows. Catalyzes the reversible cyclization of carbamoyl aspartate to dihydroorotate. The sequence is that of Dihydroorotase from Shewanella woodyi (strain ATCC 51908 / MS32).